The sequence spans 377 residues: G-protein coupled receptor 54 (377 aa).

The Extracellular portion of the chain corresponds to Met-1 to Pro-49. N-linked (GlcNAc...) asparagine glycans are attached at residues Asn-9, Asn-17, and Asn-22. The chain crosses the membrane as a helical span at residues Leu-50 to Ile-70. At Ser-71 to Asp-91 the chain is on the cytoplasmic side. Residues Ile-92–Ile-112 form a helical membrane-spanning segment. At Phe-113 to Lys-119 the chain is on the extracellular side. A disulfide bridge connects residues Cys-118 and Cys-198. The chain crosses the membrane as a helical span at residues Phe-120–Ser-140. Residues Gly-141 to Lys-160 lie on the Cytoplasmic side of the membrane. A helical membrane pass occupies residues Val-161 to Leu-181. At Met-182–Arg-209 the chain is on the extracellular side. The helical transmembrane segment at Ala-210 to Cys-230 threads the bilayer. Over Tyr-231–Met-269 the chain is Cytoplasmic. A helical membrane pass occupies residues Val-270–Phe-290. Residues Gln-291 to Lys-305 are Extracellular-facing. A helical transmembrane segment spans residues Ile-306–Met-328. At Gly-329–Asn-377 the chain is on the cytoplasmic side.

It belongs to the G-protein coupled receptor 1 family. In terms of tissue distribution, expressed in a significantly high percentage (45-60%) of mature GnRH1, GnRH2, and GnRH3 neurons and in immature GnRH3 neurons, which had migrated to the vicinity of their final locations in the brain. Only 5% of immature GnRH1 and GnRH2 neurons have receptor transcripts.

It is found in the cell membrane. In terms of biological role, receptor speculated to be essential for sexual development. May regulate gonadotropin-releasing hormone (GnRH) secretion. The receptor expression could be a 'stop signal' for GnRH1, GnRH2, and GnRH3 neuronal migration, leading to suppression of cell growth and modulation of GnRH secretion, which is important for normal sexual development. In Oreochromis niloticus (Nile tilapia), this protein is G-protein coupled receptor 54 (gpr54).